We begin with the raw amino-acid sequence, 257 residues long: Auxin-responsive protein IAA17 (257 aa).

Disordered regions lie at residues 1–51 (MSPP…PAAT) and 85–119 (GKKA…QVVG). An EAR-like (transcriptional repression) motif is present at residues 33 to 37 (LRLGL). Low complexity predominate over residues 105–118 (AAAPQAPAAKAQVV). One can recognise a PB1 domain in the interval 151–239 (FLYVKVSMDG…SCRRLRIMKG (89 aa)).

The protein belongs to the Aux/IAA family. In terms of assembly, homodimers and heterodimers. As to expression, highly expressed in etiolated seedlings and flowers. Expressed in roots and green seedlings.

The protein localises to the nucleus. Functionally, aux/IAA proteins are short-lived transcriptional factors that function as repressors of early auxin response genes at low auxin concentrations. This Oryza sativa subsp. japonica (Rice) protein is Auxin-responsive protein IAA17 (IAA17).